The chain runs to 309 residues: Phytoene synthase (309 aa).

This sequence belongs to the phytoene/squalene synthase family.

The enzyme catalyses 2 (2E,6E,10E)-geranylgeranyl diphosphate = 15-cis-phytoene + 2 diphosphate. Its pathway is carotenoid biosynthesis; phytoene biosynthesis; all-trans-phytoene from geranylgeranyl diphosphate: step 1/1. Catalyzes the reaction from prephytoene diphosphate to phytoene. The sequence is that of Phytoene synthase (crtB) from Arthrospira platensis (Spirulina platensis).